The sequence spans 429 residues: Glutamate-1-semialdehyde 2,1-aminomutase 2 (429 aa).

Lysine 268 is modified (N6-(pyridoxal phosphate)lysine).

Belongs to the class-III pyridoxal-phosphate-dependent aminotransferase family. HemL subfamily. As to quaternary structure, homodimer. The cofactor is pyridoxal 5'-phosphate.

It is found in the cytoplasm. The catalysed reaction is (S)-4-amino-5-oxopentanoate = 5-aminolevulinate. Its pathway is porphyrin-containing compound metabolism; protoporphyrin-IX biosynthesis; 5-aminolevulinate from L-glutamyl-tRNA(Glu): step 2/2. The protein is Glutamate-1-semialdehyde 2,1-aminomutase 2 of Bacillus anthracis (strain A0248).